The primary structure comprises 541 residues: Peptidyl-alpha-hydroxyglycine alpha-amidating lyase 1 (541 aa).

An N-terminal signal peptide occupies residues Met-1–Ser-33. The Extracellular portion of the chain corresponds to Gln-34–Ala-458. Asn-92 carries N-linked (GlcNAc...) asparagine glycosylation. NHL repeat units lie at residues Gly-164–Arg-205, Leu-215–Lys-258, and Gly-272–Ser-314. Intrachain disulfides connect Cys-228-Cys-248 and Cys-299-Cys-310. N-linked (GlcNAc...) asparagine glycosylation occurs at Asn-315. One copy of the NHL 4 repeat lies at Lys-374–Arg-418. A helical membrane pass occupies residues Ile-459–Phe-479. Residues Ala-480 to Ala-541 lie on the Cytoplasmic side of the membrane. Residues Leu-521–Ala-541 form a disordered region.

The protein belongs to the peptidyl-alpha-hydroxyglycine alpha-amidating lyase family. It depends on Zn(2+) as a cofactor. In terms of processing, N-glycosylated. In terms of tissue distribution, widely expressed. In mature larvae, it is ubiquitously expressed with a low expression in all cells and a stronger expression in a subset of neurons. Colocalizes with neuropeptide proctolin. In adults, weak expression is observed in most neuronal cell bodies and in scattered large cells throughout the protocerebrum and also in the subesophageal neuromeres (at protein level).

Its subcellular location is the cell membrane. The enzyme catalyses a [peptide]-C-terminal (2S)-2-hydroxyglycine = a [peptide]-C-terminal amide + glyoxylate. Peptidyl-alpha-hydroxylglycine alpha-amidating lyase that catalyzes an essential reaction in C-terminal alpha-amidation of peptides. Mediates the dismutation of the unstable peptidyl(2-hydroxyglycine) intermediate to glyoxylate and the corresponding desglycine peptide amide. C-terminal amidation of peptides such as neuropeptides is essential for full biological activity. In Drosophila melanogaster (Fruit fly), this protein is Peptidyl-alpha-hydroxyglycine alpha-amidating lyase 1 (Pal1).